A 1682-amino-acid chain; its full sequence is Sodium channel protein type 7 subunit alpha (1682 aa).

Topologically, residues 1-117 (MLASPEPKGL…RRTTIKVLVH (117 aa)) are cytoplasmic. Residues 100–401 (TLSPFNCIRR…ILAMAYEEEK (302 aa)) form an I repeat. The helical transmembrane segment at 118 to 137 (PFFQLFILISVLIDCVFMSL) threads the bilayer. Over 138–141 (TNLP) the chain is Extracellular. A helical transmembrane segment spans residues 142 to 167 (KWRPVLENTLLGIYTFEILVKLFARG). The Cytoplasmic segment spans residues 168–178 (VWAGSFSFLGD). A helical transmembrane segment spans residues 179–196 (PWNWLDFSVTVFEVIIRY). Over 197-200 (SPLD) the chain is Extracellular. The helical transmembrane segment at 201-219 (FIPTLQTARTLRILKIIPL) threads the bilayer. Over 220–237 (NQGLKSLVGVLIHCLKQL) the chain is Cytoplasmic. The chain crosses the membrane as a helical span at residues 238 to 259 (IGVIILTLFFLSIFSLIGMGLF). Residues 260 to 338 (MGNLKHKCFR…PDQGFTNFDS (79 aa)) lie on the Extracellular side of the membrane. A disulfide bridge links cysteine 267 with cysteine 307. Asparagine 276, asparagine 281, and asparagine 309 each carry an N-linked (GlcNAc...) asparagine glycan. Residues 339–366 (FGWALFALFRLMAQDYPEVLYHQILYAS) constitute an intramembrane region (pore-forming). Glycine 367 is a topological domain (extracellular). A helical membrane pass occupies residues 368–407 (KVYMIFFVVVSFLFSFYMASLFLGILAMAYEEEKQRVGEI). At 408 to 505 (SKKIEPKFQQ…EFVHRIIMAP (98 aa)) the chain is on the cytoplasmic side. Serine 442 carries the post-translational modification Phosphoserine; by PKA. The II repeat unit spans residues 487–758 (CSPCWLKLKE…QLAVARIKKG (272 aa)). A helical membrane pass occupies residues 506 to 521 (FTDLFLIICIILNVCF). Topologically, residues 522–530 (LTLEHYPMS) are extracellular. The helical transmembrane segment at 531-559 (KQTNTLLNIGNLVFIGIFTAEMIFKIIAM) threads the bilayer. The Cytoplasmic segment spans residues 560–568 (HPYGYFQVG). The chain crosses the membrane as a helical span at residues 569-586 (WNIFDSMIVFHGLIELCL). The Extracellular portion of the chain corresponds to 587–592 (ANVAGM). The helical transmembrane segment at 593-609 (ALLRLFRMLRIFKLGKY) threads the bilayer. The Cytoplasmic segment spans residues 610–626 (WPTFQILMWSLSNSWVA). The chain crosses the membrane as a helical span at residues 627–655 (LKDLVLLLFTFIFFSAAFGMKLFGKNYEE). Residues 656 to 673 (FVCHIDKDCQLPRWHMHD) lie on the Extracellular side of the membrane. Intrachain disulfides connect cysteine 658/cysteine 664 and cysteine 696/cysteine 705. The pore-forming intramembrane region spans 674–700 (FFHSFLNVFRILCGEWVETLWDCMEVA). Position 701 (glycine 701) is a topological domain, extracellular. The helical transmembrane segment at 702–732 (QSWCIPFYLMVILIGNLLVLYLFLALVSSFS) threads the bilayer. At 733-934 (SCKDVTAEEN…KTCCKIVENN (202 aa)) the chain is on the cytoplasmic side. The residue at position 777 (threonine 777) is a Phosphothreonine; by PKA. Residues 801 to 871 (TQDFLKDKEK…SKEKIKQSSS (71 aa)) form a disordered region. Residues 804–819 (FLKDKEKSSGTEKNAT) are compositionally biased toward basic and acidic residues. The segment covering 820-834 (ENESQSLIPSPSVSE) has biased composition (polar residues). Position 843 is a phosphoserine (serine 843). Serine 869 and serine 905 each carry phosphoserine; by PKA. Residues 916–1224 (KGKIWQNIRK…RKQYRRLKKL (309 aa)) form an III repeat. The helical transmembrane segment at 935–953 (WFKCFIGLVTLLSTGTLAF) threads the bilayer. Residues 954–961 (EDIYMDQR) are Extracellular-facing. The helical transmembrane segment at 962–990 (KTIKILLEYADMIFTYIFILEMLLKWMAY) threads the bilayer. The Cytoplasmic segment spans residues 991–998 (GFKAYFSN). Residues 999–1020 (GWYRLDFVVVIVFCLSLIGKTR) traverse the membrane as a helical segment. Glutamate 1021 is a topological domain (extracellular). Residues 1022–1040 (ELKPLISMKFLRPLRVLSQ) traverse the membrane as a helical segment. Topologically, residues 1041-1055 (FERMKVVVRALIKTT) are cytoplasmic. The helical transmembrane segment at 1056–1080 (LPTLNVFLVCLMIWLIFSIMGVDLF) threads the bilayer. At 1081–1127 (AGRFYECIDPTSGERFPSSEVMNKSRCESLLFNESMLWENAKMNFDN) the chain is on the extracellular side. Cysteines 1087 and 1107 form a disulfide. N-linked (GlcNAc...) asparagine glycans are attached at residues asparagine 1103 and asparagine 1113. Residues 1128 to 1154 (VGNGFLSLLQVATFNGWITIMNSAIDS) constitute an intramembrane region (pore-forming). Topologically, residues 1155–1167 (VAVNIQPHFEVNI) are extracellular. A helical membrane pass occupies residues 1168–1202 (YMYCYFINFIIFGVFLPLSMLITVIIDNFNKHKIK). Over 1203–1250 (LGGSNIFITVKQRKQYRRLKKLMYEDSQRPVPRPLNKLQGFIFDVVTS) the chain is Cytoplasmic. The stretch at 1233 to 1531 (VPRPLNKLQG…WKRFDPDRTQ (299 aa)) is one IV repeat. Residues 1251–1272 (QAFNVIVMVLICFQAIAMMIDT) traverse the membrane as a helical segment. The Extracellular portion of the chain corresponds to 1273–1276 (DVQS). The helical transmembrane segment at 1277–1305 (LQMSIALYWINSIFVMLYTMECILKLIAF) threads the bilayer. Residues 1306-1312 (RCFYFTI) are Cytoplasmic-facing. A helical transmembrane segment spans residues 1313–1338 (AWNIFDFMVVIFSITGLCLPMTVGSY). Over 1339 to 1341 (LVP) the chain is Extracellular. Residues 1342-1362 (PSLVQLILLSRIIHMLRLGKG) traverse the membrane as a helical segment. The Cytoplasmic segment spans residues 1363–1377 (PKVFHNLMLPLMLSL). A helical membrane pass occupies residues 1378 to 1402 (PALLNIILLIFLVMFIYAVFGMYNF). Residues 1403–1420 (AYVKKEAGINDVSNFETF) lie on the Extracellular side of the membrane. The pore-forming intramembrane region spans 1421-1444 (GNSMLCLFQVAIFAGWDGMLDAIF). At 1445 to 1468 (NSKWSDCDPDKINPGTQVRGDCGN) the chain is on the extracellular side. Cysteine 1451 and cysteine 1466 are joined by a disulfide. A helical membrane pass occupies residues 1469 to 1504 (PSVGIFYFVSYILISWLIIVNMYIVVVMEFLNIASK). Topologically, residues 1505–1682 (KKNKTLSEDD…KEKSPIQSQI (178 aa)) are cytoplasmic.

The protein belongs to the sodium channel (TC 1.A.1.10) family. SCN7A subfamily. In terms of assembly, the sodium channel formed by SCN7A is probably a heterooligomeric complex consisting of the ion conducting pore forming alpha subunit SCN7A and regulatory beta subunits such as SCN3B. Interacts with ATP1A1; activates ATP1A1 and thereby indirectly signals to nearby neurons to regulate sodium homeostasis. In terms of tissue distribution, heart and uterus.

The protein resides in the cell membrane. It catalyses the reaction Na(+)(in) = Na(+)(out). Its function is as follows. Sodium leak channel functioning as an osmosensor regulating sodium ion levels in various tissues and organs. While most sodium channels are voltage-gated, SCN7A is not and lets sodium flow through membrane along its concentration gradient. In glial cells of the central nervous system, senses body-fluid sodium levels and controls salt intake behavior as well as voluntary water intake through activation of nearby neurons to maintain appropriate sodium levels in the body. By mediating sodium influx into keratinocytes, also plays a role in skin barrier homeostasis. This is Sodium channel protein type 7 subunit alpha from Homo sapiens (Human).